A 157-amino-acid chain; its full sequence is Large ribosomal subunit protein eL24 (157 aa).

K2 is covalently cross-linked (Glycyl lysine isopeptide (Lys-Gly) (interchain with G-Cter in SUMO2)). At E4 the chain carries ADP-ribosyl glutamic acid. K27 is subject to N6-acetyllysine; alternate. A Glycyl lysine isopeptide (Lys-Gly) (interchain with G-Cter in SUMO2); alternate cross-link involves residue K27. K35 participates in a covalent cross-link: Glycyl lysine isopeptide (Lys-Gly) (interchain with G-Cter in SUMO2). K77 bears the N6-acetyllysine mark. Residue T83 is modified to Phosphothreonine. The residue at position 86 (S86) is a Phosphoserine. K93 is modified (N6-acetyllysine). Basic and acidic residues predominate over residues 106 to 117 (EQAIRAAKEAKK). Positions 106–157 (EQAIRAAKEAKKAKQASKKTAMAAAKAPTKAAPKQKIVKPVKVSAPRVGGKR) are disordered. Over residues 123–140 (KKTAMAAAKAPTKAAPKQ) the composition is skewed to low complexity. K131 bears the N6-succinyllysine mark. A Glycyl lysine isopeptide (Lys-Gly) (interchain with G-Cter in SUMO2) cross-link involves residue K147. S149 is modified (phosphoserine).

This sequence belongs to the eukaryotic ribosomal protein eL24 family. In terms of assembly, component of the large ribosomal subunit. Post-translationally, mono-ADP-ribosylation at Glu-4 by PARP16 inhibits polysome assembly and mRNA loading, thereby inhibiting protein translation.

It localises to the cytoplasm. Component of the large ribosomal subunit. The ribosome is a large ribonucleoprotein complex responsible for the synthesis of proteins in the cell. The chain is Large ribosomal subunit protein eL24 (RPL24) from Bos taurus (Bovine).